Reading from the N-terminus, the 983-residue chain is Isoleucine--tRNA ligase (983 aa).

The 'HIGH' region signature appears at 61–71 (PYANGELHVGH). E608 serves as a coordination point for L-isoleucyl-5'-AMP. The 'KMSKS' region motif lies at 649–653 (KMSKS). K652 is an ATP binding site. Residues C952, C955, C972, and C975 each coordinate Zn(2+).

Belongs to the class-I aminoacyl-tRNA synthetase family. IleS type 1 subfamily. Monomer. Requires Zn(2+) as cofactor.

It is found in the cytoplasm. The enzyme catalyses tRNA(Ile) + L-isoleucine + ATP = L-isoleucyl-tRNA(Ile) + AMP + diphosphate. Catalyzes the attachment of isoleucine to tRNA(Ile). As IleRS can inadvertently accommodate and process structurally similar amino acids such as valine, to avoid such errors it has two additional distinct tRNA(Ile)-dependent editing activities. One activity is designated as 'pretransfer' editing and involves the hydrolysis of activated Val-AMP. The other activity is designated 'posttransfer' editing and involves deacylation of mischarged Val-tRNA(Ile). This is Isoleucine--tRNA ligase from Gloeobacter violaceus (strain ATCC 29082 / PCC 7421).